Consider the following 317-residue polypeptide: Methionyl-tRNA formyltransferase (317 aa).

112 to 115 (SILP) is a (6S)-5,6,7,8-tetrahydrofolate binding site.

This sequence belongs to the Fmt family.

The enzyme catalyses L-methionyl-tRNA(fMet) + (6R)-10-formyltetrahydrofolate = N-formyl-L-methionyl-tRNA(fMet) + (6S)-5,6,7,8-tetrahydrofolate + H(+). Its function is as follows. Attaches a formyl group to the free amino group of methionyl-tRNA(fMet). The formyl group appears to play a dual role in the initiator identity of N-formylmethionyl-tRNA by promoting its recognition by IF2 and preventing the misappropriation of this tRNA by the elongation apparatus. This chain is Methionyl-tRNA formyltransferase, found in Mannheimia succiniciproducens (strain KCTC 0769BP / MBEL55E).